Reading from the N-terminus, the 365-residue chain is GTPase Obg (365 aa).

In terms of domain architecture, Obg spans 1-177; that stretch reads MFTDYVRILA…GQFLLELKTI (177 aa). The interval 64–85 is disordered; it reads QFAEDGQPGKGQKRKGRDGKNL. Residues 178–348 form the OBG-type G domain; sequence ADVGFVGLPN…FLNSCRKSFE (171 aa). GTP-binding positions include 184–191, 209–213, 231–234, 300–303, and 329–331; these read GLPNSGKS, FTTLK, DIPG, NKVD, and SAL. The Mg(2+) site is built by serine 191 and threonine 211.

Belongs to the TRAFAC class OBG-HflX-like GTPase superfamily. OBG GTPase family. In terms of assembly, monomer. Requires Mg(2+) as cofactor.

The protein localises to the cytoplasm. In terms of biological role, an essential GTPase which binds GTP, GDP and possibly (p)ppGpp with moderate affinity, with high nucleotide exchange rates and a fairly low GTP hydrolysis rate. Plays a role in control of the cell cycle, stress response, ribosome biogenesis and in those bacteria that undergo differentiation, in morphogenesis control. The protein is GTPase Obg of Methylacidiphilum infernorum (isolate V4) (Methylokorus infernorum (strain V4)).